We begin with the raw amino-acid sequence, 277 residues long: Heme oxygenase (277 aa).

His-29 is a binding site for heme b.

It belongs to the heme oxygenase family.

Its subcellular location is the microsome. It localises to the endoplasmic reticulum. It carries out the reaction heme b + 3 reduced [NADPH--hemoprotein reductase] + 3 O2 = biliverdin IXalpha + CO + Fe(2+) + 3 oxidized [NADPH--hemoprotein reductase] + 3 H2O + H(+). Heme oxygenase cleaves the heme ring at the alpha methene bridge to form biliverdin. Biliverdin is subsequently converted to bilirubin by biliverdin reductase. Under physiological conditions, the activity of heme oxygenase is highest in the spleen, where senescent erythrocytes are sequestrated and destroyed. This chain is Heme oxygenase (hmox), found in Takifugu rubripes (Japanese pufferfish).